Consider the following 392-residue polypeptide: MEVTQRGCDELLIAAEWEQKLARSAATGVPLRIKLGLDPTAPDIHIGHTVVLNKMRQLQDLGHQVIFLIGDFTSTIGDPSGRNATRPPLTREQIEANAQTYYRQASMVLDPSKTEIRYNSEWCDPLGARGIIQLAAKYTVARMMERDDFTKRYKAGVPISVHEFLYPLMQGYDSVALKSDLELGGTDQKFNLLVGRELQKEYGQEPQCILTMPLLVGLDGVEKMSKSKGNYVGISEAPNEMFGKLMSISDDLMWTYYTLLSFRPLAEIDLMKQEVTLGRNPRDCKVLLAQEIIARFHSQADAERALEDFNHRARGGVPDDIPQIELSGAPIGIAQLLKQAGLCPSTSEANRNIEQGGVKIDGTVISDKGLKVEAGTFVMQVGKRRFARVVLS.

A 'HIGH' region motif is present at residues 39 to 48 (PTAPDIHIGH). The 'KMSKS' region signature appears at 223 to 227 (KMSKS). Residue Lys226 coordinates ATP. The 61-residue stretch at 331–391 (IGIAQLLKQA…GKRRFARVVL (61 aa)) folds into the S4 RNA-binding domain.

Belongs to the class-I aminoacyl-tRNA synthetase family. TyrS type 2 subfamily. In terms of assembly, homodimer.

It localises to the cytoplasm. The catalysed reaction is tRNA(Tyr) + L-tyrosine + ATP = L-tyrosyl-tRNA(Tyr) + AMP + diphosphate + H(+). Functionally, catalyzes the attachment of tyrosine to tRNA(Tyr) in a two-step reaction: tyrosine is first activated by ATP to form Tyr-AMP and then transferred to the acceptor end of tRNA(Tyr). The chain is Tyrosine--tRNA ligase from Ralstonia nicotianae (strain ATCC BAA-1114 / GMI1000) (Ralstonia solanacearum).